An 806-amino-acid polypeptide reads, in one-letter code: Sucrose synthase (806 aa).

The GT-B glycosyltransferase stretch occupies residues Met-275 to Thr-752.

It belongs to the glycosyltransferase 1 family. Plant sucrose synthase subfamily.

It catalyses the reaction an NDP-alpha-D-glucose + D-fructose = a ribonucleoside 5'-diphosphate + sucrose + H(+). Its function is as follows. Sucrose-cleaving enzyme that provides UDP-glucose and fructose for various metabolic pathways. This chain is Sucrose synthase (SUCS), found in Vicia faba (Broad bean).